The following is a 197-amino-acid chain: Tic20 family protein Ycf60 (197 aa).

Helical transmembrane passes span 3-23 (IIIA…GVGV), 47-66 (FGYY…PDVL), 81-101 (LVVV…MSYF), 118-138 (VSQA…LNAL), and 141-161 (MILM…LTMG).

It belongs to the Tic20 family.

The protein localises to the plastid. It is found in the chloroplast membrane. This Cyanidioschyzon merolae (strain NIES-3377 / 10D) (Unicellular red alga) protein is Tic20 family protein Ycf60 (ycf60).